The sequence spans 122 residues: Large ribosomal subunit protein uL14 (122 aa).

Belongs to the universal ribosomal protein uL14 family. As to quaternary structure, part of the 50S ribosomal subunit. Forms a cluster with proteins L3 and L19. In the 70S ribosome, L14 and L19 interact and together make contacts with the 16S rRNA in bridges B5 and B8.

Its function is as follows. Binds to 23S rRNA. Forms part of two intersubunit bridges in the 70S ribosome. The sequence is that of Large ribosomal subunit protein uL14 from Oenococcus oeni (strain ATCC BAA-331 / PSU-1).